A 436-amino-acid polypeptide reads, in one-letter code: Acetyl-CoA decarbonylase/synthase complex subunit delta (436 aa).

This sequence belongs to the CdhD family. As to quaternary structure, heterodimer of delta and gamma chains. The ACDS complex is made up of alpha, epsilon, beta, gamma and delta chains with a probable stoichiometry of (alpha(2)epsilon(2))(4)-beta(8)-(gamma(1)delta(1))(8).

The protein operates within one-carbon metabolism; methanogenesis from acetate. In terms of biological role, part of a complex that catalyzes the reversible cleavage of acetyl-CoA, allowing growth on acetate as sole source of carbon and energy. Probably maintains the overall quaternary structure of the ACDS complex. In Methanosarcina mazei (strain ATCC BAA-159 / DSM 3647 / Goe1 / Go1 / JCM 11833 / OCM 88) (Methanosarcina frisia), this protein is Acetyl-CoA decarbonylase/synthase complex subunit delta.